We begin with the raw amino-acid sequence, 600 residues long: Dihydroxy-acid dehydratase (600 aa).

D82 lines the Mg(2+) pocket. C123 lines the [2Fe-2S] cluster pocket. The Mg(2+) site is built by D124 and K125. K125 carries the N6-carboxylysine modification. Residue C192 participates in [2Fe-2S] cluster binding. E489 serves as a coordination point for Mg(2+). S515 acts as the Proton acceptor in catalysis.

It belongs to the IlvD/Edd family. As to quaternary structure, homodimer. [2Fe-2S] cluster is required as a cofactor. Mg(2+) serves as cofactor.

It catalyses the reaction (2R)-2,3-dihydroxy-3-methylbutanoate = 3-methyl-2-oxobutanoate + H2O. It carries out the reaction (2R,3R)-2,3-dihydroxy-3-methylpentanoate = (S)-3-methyl-2-oxopentanoate + H2O. The protein operates within amino-acid biosynthesis; L-isoleucine biosynthesis; L-isoleucine from 2-oxobutanoate: step 3/4. It functions in the pathway amino-acid biosynthesis; L-valine biosynthesis; L-valine from pyruvate: step 3/4. Functionally, functions in the biosynthesis of branched-chain amino acids. Catalyzes the dehydration of (2R,3R)-2,3-dihydroxy-3-methylpentanoate (2,3-dihydroxy-3-methylvalerate) into 2-oxo-3-methylpentanoate (2-oxo-3-methylvalerate) and of (2R)-2,3-dihydroxy-3-methylbutanoate (2,3-dihydroxyisovalerate) into 2-oxo-3-methylbutanoate (2-oxoisovalerate), the penultimate precursor to L-isoleucine and L-valine, respectively. The chain is Dihydroxy-acid dehydratase from Bacteroides fragilis (strain YCH46).